The primary structure comprises 598 residues: Probable translation initiation factor IF-2 (598 aa).

Residues 3–225 (LRCPIVSVLG…GLAQKFLEQK (223 aa)) enclose the tr-type G domain. The G1 stretch occupies residues 12 to 19 (GHVDHGKT). GTP is bound at residue 12-19 (GHVDHGKT). Positions 37-41 (GITQH) are G2. The tract at residues 76-79 (DTPG) is G3. Residues 76 to 80 (DTPGH) and 130 to 133 (NKLD) contribute to the GTP site. Residues 130-133 (NKLD) form a G4 region. Residues 200-202 (SAM) are G5.

Belongs to the TRAFAC class translation factor GTPase superfamily. Classic translation factor GTPase family. IF-2 subfamily.

In terms of biological role, function in general translation initiation by promoting the binding of the formylmethionine-tRNA to ribosomes. Seems to function along with eIF-2. The polypeptide is Probable translation initiation factor IF-2 (Methanococcus maripaludis (strain C6 / ATCC BAA-1332)).